A 998-amino-acid chain; its full sequence is Protein Smaug (998 aa).

Positions 1-37 (MKYATGTDNAMTSGISGQTNNSNSASNEMQPTTSTPT) are enriched in polar residues. 3 disordered regions span residues 1-45 (MKYA…EATS), 50-69 (TATY…QSQP), and 329-370 (LCPA…GSSS). Residues 329–338 (LCPASGSRSS) show a composition bias toward low complexity. Residues S564 and S575 each carry the phosphoserine modification. Residues 583 to 763 (EFKPNYIKFH…KDLKFKLSKM (181 aa)) form an interaction with cup region. Residues 600–654 (GIGLWLKSLRLHKYIELFKNMTYEEMLLITEDFLQSVGVTKGASHKLALCIDKLK) enclose the SAM domain. Disordered stretches follow at residues 773 to 892 (HVKP…MQQM) and 942 to 977 (NNGS…QQPK). Composition is skewed to polar residues over residues 801-822 (KSGS…NFSL) and 854-864 (HQPQYKSSSYP). A Phosphoserine modification is found at S971.

Belongs to the SMAUG family. As to quaternary structure, interacts with oskar (osk). Binds to the 3'-UTR of nos. Interacts with cup, which in turn recruits eIF4-E, leading to an indirect interaction between smg and eIF4-E that prevents mRNA translation.

The protein resides in the cytoplasm. Functionally, translation regulator that binds to the 3'-UTR of specific mRNAs such as nanos (nos) and prevent their translation. Prevents translation of unlocalized nos in the bulk cytoplasm via the recruitment of cup. This is Protein Smaug from Drosophila simulans (Fruit fly).